The primary structure comprises 399 residues: MNNSIILIFVAILIIFPNEFSKPTRAFSNNNFVYTDGTHFALNGKSLYINGFNAYWLMYIAYDPSTRIKVTNTFQQASKYKMNVARTWAFSHGGSRPLQSAPGVYNEQMFQGLDFVISEAKKYGIHLIMSLVNNWDAFGGKKQYVEWAVQRGQKLTSDDDFFTNPMVKGFYKNNVKVVLTRVNTITKVAYKDDPTILSWELINEPRCPSDLSGKTFQNWVLEMAGYLKSIDSNHLLEIGLEGFYGNDMRQYNPNSYIFGTNFISNNQVQGIDFTTIHMYPNQWLPGLTQEAQDKWASQWIQVHIDDSKMLKKPLLIAEFGKSTKTPGYTVAKRDNYFEKIYGTIFNCAKSGGPCGGGLFWQVLGQGMSSFDDGYQVVLQESPSTSRVILLQSLRLSKLS.

The N-terminal stretch at 1–26 (MNNSIILIFVAILIIFPNEFSKPTRA) is a signal peptide. Positions 88 and 203 each coordinate substrate. The active-site Proton donor is the glutamate 204. Tyrosine 279 provides a ligand contact to substrate. The active-site Nucleophile is the glutamate 318. A disulfide bridge connects residues cysteine 347 and cysteine 354. Tryptophan 360 contributes to the substrate binding site.

Belongs to the glycosyl hydrolase 5 (cellulase A) family. In terms of tissue distribution, expressed in flowers and fruit pericarp.

Its subcellular location is the secreted. It carries out the reaction Random hydrolysis of (1-&gt;4)-beta-D-mannosidic linkages in mannans, galactomannans and glucomannans.. In terms of biological role, possesses endo-beta-mannanase and mannan transglycosylase activities. May be involved in cell wall degradation during fruit ripening. In Solanum lycopersicum (Tomato), this protein is Mannan endo-1,4-beta-mannosidase 4 (MAN4).